A 136-amino-acid polypeptide reads, in one-letter code: Secreted RxLR effector protein 10 (136 aa).

A signal peptide spans 1 to 22 (MRVLNFVLTTTVVLLTSSEGIA). Positions 42–56 (RSLRATENPGSDESR) match the RxLR-dEER motif. The interval 42-78 (RSLRATENPGSDESRLNEKDTGFDPDGSSSKEDEDIG) is disordered. Residues 53–63 (DESRLNEKDTG) show a composition bias toward basic and acidic residues.

It belongs to the RxLR effector family.

It is found in the secreted. Its subcellular location is the host cytoplasm. The protein resides in the host nucleus. In terms of biological role, effector that acts as a broad suppressor of cell death to interrupt plant immunity. Inhibits cell death induced by cell death-inducing proteins, including the PAMP elicitor INF1 from P.infestans. In Plasmopara viticola (Downy mildew of grapevine), this protein is Secreted RxLR effector protein 10.